The following is a 360-amino-acid chain: MSDLASLETSILDQIAAAGDEAALEAVRVAALGKKGSISALLATLGKMSPDERKTQGAAINLAKDKVTQALAARRDVLKAAALDARLAAETIDVTLPLQDSPAETGRIHPLSQVMDELTTIFADMGFSIAEGPDVETDDYNFTKLNFPEGHPAREMHDTFFFNPKPDGSRMLLRTHTSPVQVRTMLTQKPPIRVICPGRTYRIDSDATHTPQFHQVEGLVIDKGSHLGHLKWILHEFCKAFFEVDHINMKFRPSFFPFTEPSLEVDIQCRRDKGEIRFGEGEDWLEILGCGMVHPNVLRACGIDPDEYQGFAWGMGIDRIAMLKYGMSDLRQLFEGDVRWLSHYGFKPLEVPTLAGGLST.

Glu-260 contributes to the Mg(2+) binding site.

It belongs to the class-II aminoacyl-tRNA synthetase family. Phe-tRNA synthetase alpha subunit type 1 subfamily. Tetramer of two alpha and two beta subunits. Requires Mg(2+) as cofactor.

It localises to the cytoplasm. It carries out the reaction tRNA(Phe) + L-phenylalanine + ATP = L-phenylalanyl-tRNA(Phe) + AMP + diphosphate + H(+). This Bradyrhizobium sp. (strain BTAi1 / ATCC BAA-1182) protein is Phenylalanine--tRNA ligase alpha subunit.